The primary structure comprises 450 residues: UDP-N-acetylmuramoylalanine--D-glutamate ligase (450 aa).

Position 119 to 125 (119 to 125) interacts with ATP; sequence GSNGKTT.

Belongs to the MurCDEF family.

It localises to the cytoplasm. It catalyses the reaction UDP-N-acetyl-alpha-D-muramoyl-L-alanine + D-glutamate + ATP = UDP-N-acetyl-alpha-D-muramoyl-L-alanyl-D-glutamate + ADP + phosphate + H(+). It participates in cell wall biogenesis; peptidoglycan biosynthesis. In terms of biological role, cell wall formation. Catalyzes the addition of glutamate to the nucleotide precursor UDP-N-acetylmuramoyl-L-alanine (UMA). The polypeptide is UDP-N-acetylmuramoylalanine--D-glutamate ligase (Streptococcus pneumoniae serotype 19F (strain G54)).